Here is a 70-residue protein sequence, read N- to C-terminus: Small ribosomal subunit protein bS21 (70 aa).

This sequence belongs to the bacterial ribosomal protein bS21 family.

This is Small ribosomal subunit protein bS21 from Paracidovorax citrulli (strain AAC00-1) (Acidovorax citrulli).